The primary structure comprises 171 residues: tRNA-specific adenosine deaminase (171 aa).

The CMP/dCMP-type deaminase domain occupies 6-133 (EEQTYFMQEA…ERLNHRVQVE (128 aa)). A Zn(2+)-binding site is contributed by His-57. The Proton donor role is filled by Glu-59. Zn(2+)-binding residues include Cys-87 and Cys-90.

This sequence belongs to the cytidine and deoxycytidylate deaminase family. Homodimer. It depends on Zn(2+) as a cofactor.

It catalyses the reaction adenosine(34) in tRNA + H2O + H(+) = inosine(34) in tRNA + NH4(+). Catalyzes the deamination of adenosine to inosine at the wobble position 34 of tRNA(Arg2). The chain is tRNA-specific adenosine deaminase from Streptococcus pyogenes serotype M3 (strain ATCC BAA-595 / MGAS315).